A 184-amino-acid chain; its full sequence is Photosystem I assembly protein Ycf4 (184 aa).

Helical transmembrane passes span 22–42 (FCWA…GTSS) and 57–77 (IIFF…LFIS).

It belongs to the Ycf4 family.

The protein localises to the plastid. Its subcellular location is the chloroplast thylakoid membrane. Functionally, seems to be required for the assembly of the photosystem I complex. In Arabis hirsuta (Hairy rock-cress), this protein is Photosystem I assembly protein Ycf4.